Here is an 82-residue protein sequence, read N- to C-terminus: Putative membrane protein insertion efficiency factor (82 aa).

The protein belongs to the UPF0161 family.

The protein resides in the cell inner membrane. Could be involved in insertion of integral membrane proteins into the membrane. The sequence is that of Putative membrane protein insertion efficiency factor from Synechococcus elongatus (strain ATCC 33912 / PCC 7942 / FACHB-805) (Anacystis nidulans R2).